A 208-amino-acid chain; its full sequence is Putative ribosomal protein uS2-like (208 aa).

Belongs to the universal ribosomal protein uS2 family.

The protein localises to the plastid. The protein resides in the chloroplast. This is Putative ribosomal protein uS2-like (rps2-2) from Chlamydomonas reinhardtii (Chlamydomonas smithii).